The primary structure comprises 137 residues: Large ribosomal subunit protein uL16c (137 aa).

Residues 1 to 21 (MLSPKKTKYRKQHRGRMKGKA) are disordered.

Belongs to the universal ribosomal protein uL16 family. In terms of assembly, part of the 50S ribosomal subunit.

It is found in the plastid. It localises to the chloroplast. This is Large ribosomal subunit protein uL16c from Oedogonium cardiacum (Filamentous green alga).